The chain runs to 683 residues: DNA ligase (683 aa).

NAD(+)-binding positions include Asp35–Asp39, Ser84–Leu85, and Glu116. The active-site N6-AMP-lysine intermediate is the Lys118. NAD(+)-binding residues include Arg139, Glu176, Lys293, and Lys317. Positions 419, 422, 437, and 443 each coordinate Zn(2+). In terms of domain architecture, BRCT spans Ala602–Glu683.

This sequence belongs to the NAD-dependent DNA ligase family. LigA subfamily. It depends on Mg(2+) as a cofactor. The cofactor is Mn(2+).

The enzyme catalyses NAD(+) + (deoxyribonucleotide)n-3'-hydroxyl + 5'-phospho-(deoxyribonucleotide)m = (deoxyribonucleotide)n+m + AMP + beta-nicotinamide D-nucleotide.. Its function is as follows. DNA ligase that catalyzes the formation of phosphodiester linkages between 5'-phosphoryl and 3'-hydroxyl groups in double-stranded DNA using NAD as a coenzyme and as the energy source for the reaction. It is essential for DNA replication and repair of damaged DNA. This is DNA ligase from Dechloromonas aromatica (strain RCB).